Consider the following 207-residue polypeptide: Thiamine-phosphate synthase (207 aa).

Residues 36-40 (QLRMK) and Asn-68 contribute to the 4-amino-2-methyl-5-(diphosphooxymethyl)pyrimidine site. Residues Asp-69 and Asp-88 each coordinate Mg(2+). Residue Ser-106 participates in 4-amino-2-methyl-5-(diphosphooxymethyl)pyrimidine binding. 2-[(2R,5Z)-2-carboxy-4-methylthiazol-5(2H)-ylidene]ethyl phosphate is bound at residue 132 to 134 (TNT). A 4-amino-2-methyl-5-(diphosphooxymethyl)pyrimidine-binding site is contributed by Lys-135. 2-[(2R,5Z)-2-carboxy-4-methylthiazol-5(2H)-ylidene]ethyl phosphate is bound by residues Gly-162 and 182 to 183 (VS).

It belongs to the thiamine-phosphate synthase family. It depends on Mg(2+) as a cofactor.

It catalyses the reaction 2-[(2R,5Z)-2-carboxy-4-methylthiazol-5(2H)-ylidene]ethyl phosphate + 4-amino-2-methyl-5-(diphosphooxymethyl)pyrimidine + 2 H(+) = thiamine phosphate + CO2 + diphosphate. The catalysed reaction is 2-(2-carboxy-4-methylthiazol-5-yl)ethyl phosphate + 4-amino-2-methyl-5-(diphosphooxymethyl)pyrimidine + 2 H(+) = thiamine phosphate + CO2 + diphosphate. The enzyme catalyses 4-methyl-5-(2-phosphooxyethyl)-thiazole + 4-amino-2-methyl-5-(diphosphooxymethyl)pyrimidine + H(+) = thiamine phosphate + diphosphate. It functions in the pathway cofactor biosynthesis; thiamine diphosphate biosynthesis; thiamine phosphate from 4-amino-2-methyl-5-diphosphomethylpyrimidine and 4-methyl-5-(2-phosphoethyl)-thiazole: step 1/1. Functionally, condenses 4-methyl-5-(beta-hydroxyethyl)thiazole monophosphate (THZ-P) and 2-methyl-4-amino-5-hydroxymethyl pyrimidine pyrophosphate (HMP-PP) to form thiamine monophosphate (TMP). This Methanococcus maripaludis (strain DSM 14266 / JCM 13030 / NBRC 101832 / S2 / LL) protein is Thiamine-phosphate synthase.